The chain runs to 875 residues: DNA gyrase subunit A (875 aa).

The Topo IIA-type catalytic domain maps to 34–533 (LPDVRDGLKP…NSADINLEDL (500 aa)). Tyr-122 serves as the catalytic O-(5'-phospho-DNA)-tyrosine intermediate. Positions 560 to 566 (QRRGGKG) match the GyrA-box motif. The segment at 841–875 (EPVDEEDLDTIDGSAAEGDDEIAPEVDVDDEPEEE) is disordered. The span at 857 to 875 (EGDDEIAPEVDVDDEPEEE) shows a compositional bias: acidic residues.

This sequence belongs to the type II topoisomerase GyrA/ParC subunit family. Heterotetramer, composed of two GyrA and two GyrB chains. In the heterotetramer, GyrA contains the active site tyrosine that forms a transient covalent intermediate with DNA, while GyrB binds cofactors and catalyzes ATP hydrolysis.

The protein localises to the cytoplasm. The catalysed reaction is ATP-dependent breakage, passage and rejoining of double-stranded DNA.. Functionally, a type II topoisomerase that negatively supercoils closed circular double-stranded (ds) DNA in an ATP-dependent manner to modulate DNA topology and maintain chromosomes in an underwound state. Negative supercoiling favors strand separation, and DNA replication, transcription, recombination and repair, all of which involve strand separation. Also able to catalyze the interconversion of other topological isomers of dsDNA rings, including catenanes and knotted rings. Type II topoisomerases break and join 2 DNA strands simultaneously in an ATP-dependent manner. The protein is DNA gyrase subunit A of Shigella flexneri.